The sequence spans 340 residues: Protein-arginine kinase (340 aa).

The region spanning 21-242 (VVLSSRIRLA…EQIIMQERVA (222 aa)) is the Phosphagen kinase C-terminal domain. Residues 24-28 (SSRIR), H79, R113, 164-168 (RASVM), and 195-200 (RGIYGE) each bind ATP.

Belongs to the ATP:guanido phosphotransferase family.

The enzyme catalyses L-arginyl-[protein] + ATP = N(omega)-phospho-L-arginyl-[protein] + ADP + H(+). Catalyzes the specific phosphorylation of arginine residues in proteins. The chain is Protein-arginine kinase from Listeria welshimeri serovar 6b (strain ATCC 35897 / DSM 20650 / CCUG 15529 / CIP 8149 / NCTC 11857 / SLCC 5334 / V8).